The chain runs to 150 residues: Ribonuclease H (150 aa).

One can recognise an RNase H type-1 domain in the interval 1-142 (MSDSVEIFTD…ADQLANRGVD (142 aa)). Mg(2+) is bound by residues Asp-10, Glu-48, Asp-70, and Asp-134.

This sequence belongs to the RNase H family. As to quaternary structure, monomer. Mg(2+) is required as a cofactor.

The protein localises to the cytoplasm. The catalysed reaction is Endonucleolytic cleavage to 5'-phosphomonoester.. Endonuclease that specifically degrades the RNA of RNA-DNA hybrids. The polypeptide is Ribonuclease H (Pseudomonas fluorescens (strain ATCC BAA-477 / NRRL B-23932 / Pf-5)).